An 89-amino-acid chain; its full sequence is Acylphosphatase (89 aa).

The 87-residue stretch at 3–89 folds into the Acylphosphatase-like domain; that stretch reads RFTARVAGLV…QSDLTDFRRK (87 aa). Residues Arg-18 and Asn-36 contribute to the active site.

The protein belongs to the acylphosphatase family.

It catalyses the reaction an acyl phosphate + H2O = a carboxylate + phosphate + H(+). This chain is Acylphosphatase (acyP), found in Frankia casuarinae (strain DSM 45818 / CECT 9043 / HFP020203 / CcI3).